Consider the following 295-residue polypeptide: Probable adenylate kinase 6, chloroplastic (295 aa).

The transit peptide at 1 to 46 (MAVSHRLLRPATTTIKNTFSSLFIRSLSSSSSGSSLDPKIDLEEAA) directs the protein to the chloroplast. Residue 74–79 (GVGKGT) participates in ATP binding. Residues 94–123 (ATGDLVREELSSSGLLSSQLKELVNHGKLV) are NMP. Residues threonine 95, arginine 100, 121 to 123 (KLV), 151 to 154 (GFPR), and glutamine 158 each bind AMP. Residues 187–235 (GRRICSECGGNYNVACIDIKGDDDTPRMYMPPLLPPPNCESKLISRADD) form an LID region. Arginine 188 is a binding site for ATP. Residue arginine 243 coordinates AMP. Residue glycine 271 coordinates ATP.

The protein belongs to the adenylate kinase family. In terms of assembly, monomer.

It localises to the plastid. The protein resides in the chloroplast. It carries out the reaction AMP + ATP = 2 ADP. Catalyzes the reversible transfer of the terminal phosphate group between ATP and AMP. Plays an important role in cellular energy homeostasis and in adenine nucleotide metabolism. The polypeptide is Probable adenylate kinase 6, chloroplastic (Arabidopsis thaliana (Mouse-ear cress)).